The sequence spans 268 residues: Hydroxyacylglutathione hydrolase (268 aa).

Residues His56, His58, Asp60, His61, His113, Asp130, and His168 each coordinate Zn(2+).

This sequence belongs to the metallo-beta-lactamase superfamily. Glyoxalase II family. In terms of assembly, monomer. The cofactor is Zn(2+).

The enzyme catalyses an S-(2-hydroxyacyl)glutathione + H2O = a 2-hydroxy carboxylate + glutathione + H(+). Its pathway is secondary metabolite metabolism; methylglyoxal degradation; (R)-lactate from methylglyoxal: step 2/2. Its function is as follows. Thiolesterase that catalyzes the hydrolysis of S-D-lactoyl-glutathione to form glutathione and D-lactic acid. This is Hydroxyacylglutathione hydrolase from Hydrogenovibrio crunogenus (strain DSM 25203 / XCL-2) (Thiomicrospira crunogena).